Consider the following 127-residue polypeptide: Holo-[acyl-carrier-protein] synthase (127 aa).

Residues Asp-8 and Glu-57 each contribute to the Mg(2+) site.

This sequence belongs to the P-Pant transferase superfamily. AcpS family. Mg(2+) is required as a cofactor.

It is found in the cytoplasm. It catalyses the reaction apo-[ACP] + CoA = holo-[ACP] + adenosine 3',5'-bisphosphate + H(+). In terms of biological role, transfers the 4'-phosphopantetheine moiety from coenzyme A to a Ser of acyl-carrier-protein. The protein is Holo-[acyl-carrier-protein] synthase of Ruthia magnifica subsp. Calyptogena magnifica.